The sequence spans 137 residues: uncharacterized protein (137 aa).

It belongs to the ycf72 family.

It is found in the plastid. The protein localises to the chloroplast. This is an uncharacterized protein from Saccharum hybrid (Sugarcane).